Reading from the N-terminus, the 189-residue chain is Tetratricopeptide repeat protein 36 (189 aa).

TPR repeat units lie at residues 51–84 (SKAL…LPER), 86–118 (SAYN…SGGR), and 123–156 (RQSF…GSPF).

Belongs to the TTC36 family.

The chain is Tetratricopeptide repeat protein 36 (TTC36) from Homo sapiens (Human).